The sequence spans 107 residues: uncharacterized protein (107 aa).

The 102-residue stretch at 6–107 folds into the Glutaredoxin domain; that stretch reads KKVIEQILDN…QAQVETLLAA (102 aa). Position 23 (Lys23) interacts with glutathione. Cys31 lines the [2Fe-2S] cluster pocket. Residues Arg60 and 85–86 each bind glutathione; that span reads AD.

It belongs to the glutaredoxin family. Monothiol subfamily.

It localises to the plastid. It is found in the chloroplast. This is an uncharacterized protein from Porphyra purpurea (Red seaweed).